A 137-amino-acid chain; its full sequence is Large ribosomal subunit protein uL16 (137 aa).

This sequence belongs to the universal ribosomal protein uL16 family. As to quaternary structure, part of the 50S ribosomal subunit.

Binds 23S rRNA and is also seen to make contacts with the A and possibly P site tRNAs. This Cereibacter sphaeroides (strain ATCC 17029 / ATH 2.4.9) (Rhodobacter sphaeroides) protein is Large ribosomal subunit protein uL16.